The sequence spans 139 residues: Maximins 4/H3 type 6 (139 aa).

The signal sequence occupies residues 1 to 18 (MNFKYIVAVSFLIASAYA). Positions 19 to 43 (RSVQNDEQSLSQRDVLEEESLREIR) are excised as a propeptide. Residue asparagine 70 is modified to Asparagine amide. Positions 74 to 118 (TAEDHEVMKRLEAVMRDLDSLDHPEEASERETRGFNQDEIAKEKR) are excised as a propeptide. Isoleucine 138 carries the isoleucine amide modification.

The protein belongs to the bombinin family. Expressed by the skin glands.

It is found in the secreted. Its function is as follows. Maximin-4 shows antibacterial activity against both Gram-positive and Gram-negative bacteria. It also shows antimicrobial activity against the fungus C.albicans, but not against A.flavus nor P.uticale. It has little hemolytic activity. It does not possess a significant cytotoxicity against tumor cell lines. It does not possess a significant anti-HIV activity. In terms of biological role, maximin-H3 shows antibacterial activity against both Gram-positive and Gram-negative bacteria. It also shows antimicrobial activity against the fungus C.albicans. Shows strong hemolytic activity. The chain is Maximins 4/H3 type 6 from Bombina maxima (Giant fire-bellied toad).